The sequence spans 327 residues: Lipoyl synthase (327 aa).

Positions 66, 71, 77, 92, 96, 99, and 306 each coordinate [4Fe-4S] cluster. In terms of domain architecture, Radical SAM core spans Phe-78 to Ser-295.

The protein belongs to the radical SAM superfamily. Lipoyl synthase family. Requires [4Fe-4S] cluster as cofactor.

Its subcellular location is the cytoplasm. It catalyses the reaction [[Fe-S] cluster scaffold protein carrying a second [4Fe-4S](2+) cluster] + N(6)-octanoyl-L-lysyl-[protein] + 2 oxidized [2Fe-2S]-[ferredoxin] + 2 S-adenosyl-L-methionine + 4 H(+) = [[Fe-S] cluster scaffold protein] + N(6)-[(R)-dihydrolipoyl]-L-lysyl-[protein] + 4 Fe(3+) + 2 hydrogen sulfide + 2 5'-deoxyadenosine + 2 L-methionine + 2 reduced [2Fe-2S]-[ferredoxin]. Its pathway is protein modification; protein lipoylation via endogenous pathway; protein N(6)-(lipoyl)lysine from octanoyl-[acyl-carrier-protein]: step 2/2. In terms of biological role, catalyzes the radical-mediated insertion of two sulfur atoms into the C-6 and C-8 positions of the octanoyl moiety bound to the lipoyl domains of lipoate-dependent enzymes, thereby converting the octanoylated domains into lipoylated derivatives. This Neisseria meningitidis serogroup B (strain ATCC BAA-335 / MC58) protein is Lipoyl synthase.